A 447-amino-acid polypeptide reads, in one-letter code: D-ribitol-5-phosphate cytidylyltransferase (447 aa).

Belongs to the IspD/TarI cytidylyltransferase family. IspD subfamily. Homodimer.

The protein resides in the cytoplasm. It localises to the cytosol. It carries out the reaction D-ribitol 5-phosphate + CTP + H(+) = CDP-L-ribitol + diphosphate. The catalysed reaction is D-ribose 5-phosphate + CTP + H(+) = CDP-D-ribose + diphosphate. It catalyses the reaction D-ribulose 5-phosphate + CTP + H(+) = CDP-D-ribulose + diphosphate. It participates in protein modification; protein glycosylation. In terms of biological role, cytidylyltransferase required for protein O-linked mannosylation. Catalyzes the formation of CDP-ribitol nucleotide sugar from D-ribitol 5-phosphate. CDP-ribitol is a substrate of FKTN during the biosynthesis of the phosphorylated O-mannosyl trisaccharide (N-acetylgalactosamine-beta-3-N-acetylglucosamine-beta-4-(phosphate-6-)mannose), a carbohydrate structure present in alpha-dystroglycan (DAG1), which is required for binding laminin G-like domain-containing extracellular proteins with high affinity. Shows activity toward other pentose phosphate sugars and mediates formation of CDP-ribulose or CDP-ribose using CTP and ribulose-5-phosphate or ribose-5-phosphate, respectively. Not involved in dolichol production. The chain is D-ribitol-5-phosphate cytidylyltransferase (Crppa) from Rattus norvegicus (Rat).